We begin with the raw amino-acid sequence, 2412 residues long: Centrosomal protein of 295 kDa (2412 aa).

The necessary for centriole targeting and microtubule association stretch occupies residues 1–540 (MKRKGMNTKL…KQADQPEVCC (540 aa)). Serine 13 is modified (phosphoserine). Coiled coils occupy residues 63-84 (AEEL…LEKL), 114-134 (AERK…QKNQ), 209-273 (DAHL…DLAR), 489-535 (RRKQ…QADQ), and 563-592 (HQLL…VLKE). Disordered stretches follow at residues 600-641 (SALV…YQPV) and 739-762 (LDSQ…PSPF). Serine 634 is modified (phosphoserine). Over residues 739–757 (LDSQQISSEDSENISSKPS) the composition is skewed to polar residues. A coiled-coil region spans residues 811 to 841 (AQQGDLRFLQEQLELQKKVLQARQEAREKLL). Disordered regions lie at residues 871 to 891 (SASA…ATVS), 973 to 1005 (DTQS…QDGS), 1158 to 1178 (LSSP…SVRS), and 1216 to 1240 (WVDT…QQTG). Polar residues-rich tracts occupy residues 993–1005 (PSQS…QDGS), 1158–1176 (LSSP…SVSV), and 1224–1240 (FQSS…QQTG). Coiled coils occupy residues 1300-1327 (QQDS…EAHE) and 1448-1493 (QHDD…SKQI). Serine 1573 carries the phosphoserine modification. Disordered regions lie at residues 1820 to 1895 (LAHD…LSSV), 1916 to 1937 (ESFS…EETD), 2028 to 2048 (DLSS…SESS), and 2089 to 2111 (TEGS…SQHA). Over residues 1836–1868 (SKSHDDNAEAVKVKKSDVEDHAVLSHAVSKEEA) the composition is skewed to basic and acidic residues. Over residues 1885 to 1895 (QEISQEPLSSV) the composition is skewed to polar residues. Residues 1921 to 1935 (QTEHLEQESTNKQEE) are compositionally biased toward basic and acidic residues. Over residues 2089–2108 (TEGSEQSFQQLRPEFSSQES) the composition is skewed to polar residues. Residues 2367–2412 (SLQEAFMTRQTLTERSYQRQREIWNKTRLPQTKVSKEKLPTGCTGS) are ALMS motif.

As to quaternary structure, interacts (via ALMS motif) with microtubules; this interaction is direct.

It is found in the cytoplasm. The protein localises to the cytoskeleton. It localises to the microtubule organizing center. The protein resides in the centrosome. Its subcellular location is the centriole. It is found in the spindle. Functionally, centriole-enriched microtubule-binding protein involved in centriole biogenesis. Essential for the generation of the distal portion of new-born centrioles in a CPAP- and CEP120-mediated elongation dependent manner during the cell cycle S/G2 phase after formation of the initiating cartwheel structure. Required for the recruitment of centriolar proteins, such as POC1B, POC5 and CEP135, into the distal portion of centrioles. Also required for centriole-to-centrosome conversion during mitotic progression, but is dispensable for cartwheel removal or centriole disengagement. Binds to and stabilizes centriolar microtubule. May be involved in ciliogenesis. In Mus musculus (Mouse), this protein is Centrosomal protein of 295 kDa.